Here is a 46-residue protein sequence, read N- to C-terminus: Myoregulin (46 aa).

Topologically, residues 1 to 21 (MSGKSWVLISTTSPQSLEDEI) are cytoplasmic. Residues 22-42 (LGRLLKILFVLFVDLMSIMYV) traverse the membrane as a helical segment. Over 43–46 (VITS) the chain is Lumenal.

In terms of assembly, homooligomer. Monomer. Interacts with ATP2A1/SERCA1. Interacts as a monomer with ATP2A2/SERCA2; the interaction inhibits ATP2A2 activity. Specifically expressed in all skeletal muscles. Detected in both fast- and slow-type skeletal muscle. Not expressed in cardiac or smooth muscles.

The protein resides in the sarcoplasmic reticulum membrane. Inhibits the activity of ATP2A1/SERCA1 ATPase in sarcoplasmic reticulum by decreasing the apparent affinity of the ATPase for Ca(2+), thereby acting as a key regulator of skeletal muscle activity. Its high expression in adult skeletal muscle, suggests that it constitutes the predominant regulator of ATP2A1/SERCA1 in adult skeletal muscle. Also inhibits the activity of ATP2A2/SERCA2 and ATP2A3/SERCA3. This is Myoregulin from Mus musculus (Mouse).